The sequence spans 235 residues: Elongation factor Tu (235 aa).

The tr-type G domain maps to 1 to 125 (KNMITGATQM…DGDKYIPTPS (125 aa)). 47-50 (NKQD) serves as a coordination point for GTP.

The protein belongs to the TRAFAC class translation factor GTPase superfamily. Classic translation factor GTPase family. EF-Tu/EF-1A subfamily. Monomer.

It is found in the cytoplasm. The catalysed reaction is GTP + H2O = GDP + phosphate + H(+). In terms of biological role, GTP hydrolase that promotes the GTP-dependent binding of aminoacyl-tRNA to the A-site of ribosomes during protein biosynthesis. The sequence is that of Elongation factor Tu (tufA) from Leptolyngbya boryana (Plectonema boryanum).